The sequence spans 388 residues: Nocturnin (388 aa).

E152 serves as a coordination point for Mg(2+). Substrate-binding positions include E152, K176–W178, N220, H243–A246, D281–N283, and H371.

It belongs to the CCR4/nocturin family. Requires Mg(2+) as cofactor. Expressed only in the photoreceptors of the retina. Expression is controlled by the retinal circadian clock.

It is found in the cytoplasm. The protein localises to the nucleus. Its subcellular location is the perinuclear region. The protein resides in the mitochondrion. It carries out the reaction NADP(+) + H2O = phosphate + NAD(+). The enzyme catalyses NADPH + H2O = phosphate + NADH. In terms of biological role, phosphatase which catalyzes the conversion of NADP(+) to NAD(+) and of NADPH to NADH. Shows a small preference for NADPH over NADP(+). Component of the circadian clock or downstream effector of clock function. Exhibits a high amplitude circadian rhythm with maximal levels in early evening. In constant darkness or constant light, the amplitude of the rhythm decreases. This is Nocturnin from Xenopus laevis (African clawed frog).